A 429-amino-acid polypeptide reads, in one-letter code: Serine hydroxymethyltransferase (429 aa).

Residues Leu126 and 130 to 132 (GHL) each bind (6S)-5,6,7,8-tetrahydrofolate. Lys235 carries the N6-(pyridoxal phosphate)lysine modification.

It belongs to the SHMT family. As to quaternary structure, homodimer. The cofactor is pyridoxal 5'-phosphate.

The protein resides in the cytoplasm. It carries out the reaction (6R)-5,10-methylene-5,6,7,8-tetrahydrofolate + glycine + H2O = (6S)-5,6,7,8-tetrahydrofolate + L-serine. It functions in the pathway one-carbon metabolism; tetrahydrofolate interconversion. The protein operates within amino-acid biosynthesis; glycine biosynthesis; glycine from L-serine: step 1/1. Catalyzes the reversible interconversion of serine and glycine with tetrahydrofolate (THF) serving as the one-carbon carrier. This reaction serves as the major source of one-carbon groups required for the biosynthesis of purines, thymidylate, methionine, and other important biomolecules. Also exhibits THF-independent aldolase activity toward beta-hydroxyamino acids, producing glycine and aldehydes, via a retro-aldol mechanism. This Zymomonas mobilis subsp. mobilis (strain ATCC 31821 / ZM4 / CP4) protein is Serine hydroxymethyltransferase.